Reading from the N-terminus, the 42-residue chain is Photosystem II reaction center protein J (42 aa).

Residues 10–30 form a helical membrane-spanning segment; the sequence is IPLWLIGTVVGSLAIGLLAIF.

This sequence belongs to the PsbJ family. PSII is composed of 1 copy each of membrane proteins PsbA, PsbB, PsbC, PsbD, PsbE, PsbF, PsbH, PsbI, PsbJ, PsbK, PsbL, PsbM, PsbT, PsbX, PsbY, PsbZ, Psb30/Ycf12, at least 3 peripheral proteins of the oxygen-evolving complex and a large number of cofactors. It forms dimeric complexes.

Its subcellular location is the plastid. The protein resides in the chloroplast thylakoid membrane. One of the components of the core complex of photosystem II (PSII). PSII is a light-driven water:plastoquinone oxidoreductase that uses light energy to abstract electrons from H(2)O, generating O(2) and a proton gradient subsequently used for ATP formation. It consists of a core antenna complex that captures photons, and an electron transfer chain that converts photonic excitation into a charge separation. The chain is Photosystem II reaction center protein J from Stigeoclonium helveticum (Green alga).